Reading from the N-terminus, the 619-residue chain is Guanylate cyclase soluble subunit beta-1 (619 aa).

H105 is a binding site for heme. The region spanning 421–554 is the Guanylate cyclase domain; sequence TILFSGIVGF…NTVNLTSRTE (134 aa).

This sequence belongs to the adenylyl cyclase class-4/guanylyl cyclase family. In terms of assembly, the active enzyme is formed by a heterodimer of an alpha and a beta subunit. Heterodimer with GUCY1A1. Can also form inactive homodimers in vitro. The cofactor is heme. As to expression, lung and brain.

Its subcellular location is the cytoplasm. It carries out the reaction GTP = 3',5'-cyclic GMP + diphosphate. Activated by nitric oxide in the presence of magnesium or manganese ions, binding of NO to the heme iron increases catalytic activity up to 400 folds. In terms of biological role, mediates responses to nitric oxide (NO) by catalyzing the biosynthesis of the signaling molecule cGMP. This Bos taurus (Bovine) protein is Guanylate cyclase soluble subunit beta-1 (GUCY1B1).